A 156-amino-acid chain; its full sequence is Small ribosomal subunit protein uS7 (156 aa).

Belongs to the universal ribosomal protein uS7 family. As to quaternary structure, part of the 30S ribosomal subunit. Contacts proteins S9 and S11.

In terms of biological role, one of the primary rRNA binding proteins, it binds directly to 16S rRNA where it nucleates assembly of the head domain of the 30S subunit. Is located at the subunit interface close to the decoding center, probably blocks exit of the E-site tRNA. The polypeptide is Small ribosomal subunit protein uS7 (Nitrosomonas europaea (strain ATCC 19718 / CIP 103999 / KCTC 2705 / NBRC 14298)).